We begin with the raw amino-acid sequence, 395 residues long: Multiple organellar RNA editing factor 8, chloroplastic/mitochondrial (395 aa).

Residues 1-56 (MATHTISRSILCRPAKSLSFLFTRSFASSAPLAKSPASSLLSRSRPLVAAFSSVFR) constitute a chloroplast and mitochondrion transit peptide. Basic and acidic residues predominate over residues 211–236 (ANERNRRNDRPRNNDRSRNFERRREN). The tract at residues 211–395 (ANERNRRNDR…RDGSGNPYQG (185 aa)) is disordered. Residues 240–300 (GPPPQRPPMG…GPRHPPPYGA (61 aa)) are compositionally biased toward pro residues. The segment covering 313–334 (QNYGGTPPPNYGGAPPANNMGG) has biased composition (low complexity). Pro residues predominate over residues 335–355 (APPPNYGGGPPPQYGAVPPPQ). Residues 356-385 (YGGAPPQNNNYQQQGSGMQQPQYQNNYPPN) show a composition bias toward low complexity.

The protein belongs to the MORF family. As to quaternary structure, interacts with protoporphyrinogen oxidase 1 PPOX1. Interacts with PCMP-H52/MEF10. Homodimer and heterodimers with MORF1/RIP8, MORF2/RIP2, MORF3/RIP3, MORF4/RIP4, MORF5/RIP5, MORF6/RIP6 and MORF7/RIP7. Interacts with RBG3/ORRM3. Interacts with PCMP-A2/PMD1. Interacts with ORRM1 and VAT3/OZ1. Interacts with PCMP-H13/MEF35. Interacts with RBG5/ORRM4. Interacts with ORRM6.

Its subcellular location is the mitochondrion. The protein localises to the plastid. It is found in the chloroplast. Functionally, involved in organellar RNA editing. Required for the processing of numerous RNA editing sites in mitochondria and plastids. Binds to the plastid RARE1 factor, a pentatricopeptide repeat-containing protein involved in RNA editing. This Arabidopsis thaliana (Mouse-ear cress) protein is Multiple organellar RNA editing factor 8, chloroplastic/mitochondrial.